The chain runs to 405 residues: K(+)/H(+) antiporter subunit KhtU (405 aa).

12 consecutive transmembrane segments (helical) span residues H3–N23, I29–I49, I60–F80, L85–S105, L108–I128, L153–S173, V183–A203, V222–H242, L268–I288, V297–V317, I332–A352, and A357–V377.

It belongs to the monovalent cation:proton antiporter 2 (CPA2) transporter (TC 2.A.37) family. In terms of assembly, the transporter is composed of the integral membrane protein KhtU and the regulatory protein KhtT.

Its subcellular location is the cell membrane. Potassium antiport activity requires the presence of KhtT. Activity is also modulated by KhtS. Has higher activity at alkaline pH. Its function is as follows. Potassium/proton antiporter that mediates the efflux of potassium ions from the cell. Can also mediate rubidium/proton antiport, but has no permeability for sodium or lithium ions. In the absence of KhtT, does not have antiport activity, but can catalyze potassium efflux. Involved in protection of the cell from methylglyoxal, a toxic by-product of glycolysis, via activation by S-lactoyl-BSH of the antiporter activity, leading to cytoplasmic acidification and methylglyoxal resistance. In Bacillus subtilis (strain 168), this protein is K(+)/H(+) antiporter subunit KhtU.